Consider the following 583-residue polypeptide: MRQGHAPEESEPGCEAPCAGPCHAQRVLQALNAYRRSGTLTDVVLRAGGRDFPCHRAALSAGSAYFRSLFAAGRPERGPAVVPVVPVAPEAPGTSPAGAAAALAVVLDYVYGAGVRLRAEDEAAAVLALAERLGVAGLREACVRFLEGRLRAANSLALRRVAAAFSLAPLAERCGRVLRQAFAEVARHADFLELAPDEVVALLADPALGVAREEAVFEAAMRWVRHDAPARRGQLRRLLEHVRLPLLAPAYFLEKVEADELLQACGECRPLLLEARACFILGREAGALRTRPRRFMDLAEVIVVIGGCDRKGLLKLPFADAYHPESQRWTPLPSLPGYTRSEFAACALRNDVYVSGGHINSHDVWMFSSHLHTWIKVASLHKGRWRHKMAVVQGQLFAVGGFDGLRRLHSVERYDPFSNTWAAAAPLPEAVSSAAVASCAGKLFVIGGARQGGVNTDKVQCFDPKEDRWSLRSPAPFSQRCLEAVSLEDTIYVMGGLMSKIFTYDPGTDVWGEAAVLPSPVESCGVTVCDGKVHILGGRDDRGESTDKVFTFDPSSGQVEVQPSLQRCTSSHGCVTIIQSLGR.

The BTB domain occupies 41–119 (TDVVLRAGGR…VYGAGVRLRA (79 aa)). The BACK domain maps to 146–248 (LEGRLRAANS…LEHVRLPLLA (103 aa)). 6 Kelch repeats span residues 301-350 (VIVV…ALRN), 352-394 (VYVS…VVQG), 395-441 (QLFA…SCAG), 443-489 (LFVI…SLED), 490-531 (TIYV…VCDG), and 533-579 (VHIL…TIIQ).

In Homo sapiens (Human), this protein is Kelch-like protein 35 (KLHL35).